Here is a 314-residue protein sequence, read N- to C-terminus: Olfactory receptor 11H7 (314 aa).

Residues 1–24 (MNNSQISTVTQFVLLGFPGPWKIQ) are Extracellular-facing. N-linked (GlcNAc...) asparagine glycosylation occurs at Asn-2. A helical membrane pass occupies residues 25–45 (IIFFSMILLVYIFTLTGNMAI). Topologically, residues 46–57 (ICAVRWDHRLHT) are cytoplasmic. The helical transmembrane segment at 58 to 78 (PMYVLLANFSFLEIWYVTCTV) threads the bilayer. At 79-97 (PNMLVNFFSKTKTISFSGC) the chain is on the extracellular side. A disulfide bridge connects residues Cys-97 and Cys-179. Residues 98–118 (FTQFHFFFSLGTTECFFLCVM) traverse the membrane as a helical segment. Residues 119–142 (AYDRYLAICHPLHYPSIMTGQLCG) lie on the Cytoplasmic side of the membrane. A helical transmembrane segment spans residues 143–163 (ILVSLCWLIGFLGHSISIFFI). The Extracellular segment spans residues 164–201 (FQLPFCGPNIIDHFLCDVDPLMALSSAPTHIIGHVFHS). A helical transmembrane segment spans residues 202–222 (VSSLFINLTMVYILGSYTLVL). Over 223–244 (RTVLQVPSSAGWQKAISTCGSH) the chain is Cytoplasmic. A helical transmembrane segment spans residues 245–265 (LVVVSLFYGAIMLMYVSPTPG). Residues 266–271 (NSVAMH) lie on the Extracellular side of the membrane. Residues 272–292 (KLITLIYSVVTPVLNPLIYSL) traverse the membrane as a helical segment. Topologically, residues 293–314 (RNKDMKYALHHVFCGMRIIQRS) are cytoplasmic.

This sequence belongs to the G-protein coupled receptor 1 family.

Its subcellular location is the cell membrane. Its function is as follows. Odorant receptor. Activated by isovaleric acid. This Homo sapiens (Human) protein is Olfactory receptor 11H7 (OR11H7).